A 482-amino-acid polypeptide reads, in one-letter code: Putative alpha-L-fucosidase (482 aa).

The N-terminal stretch at 1-16 (MIFLIFSILFLHLANC) is a signal peptide. Residues N182, N343, N359, and N419 are each glycosylated (N-linked (GlcNAc...) asparagine).

This sequence belongs to the glycosyl hydrolase 29 family.

The catalysed reaction is an alpha-L-fucoside + H2O = L-fucose + an alcohol. Functionally, alpha-L-fucosidase is responsible for hydrolyzing the alpha-1,6-linked fucose joined to the reducing-end N-acetylglucosamine of the carbohydrate moieties of glycoproteins. The polypeptide is Putative alpha-L-fucosidase (Caenorhabditis elegans).